The chain runs to 386 residues: Pepsin A (386 aa).

Positions 1–15 (MKWLLLLSLVALSEC) are cleaved as a signal peptide. The propeptide at 16–60 (YIYKVPLVKKKSLRKNLMEQGLLQDYLKTHSINPASKYLKEAASM) is activation peptide. In terms of domain architecture, Peptidase A1 spans 74–383 (YFGTIGIGTP…DRGNNQVGLA (310 aa)). Residue D92 is part of the active site. 2 cysteine pairs are disulfide-bonded: C105/C110 and C266/C270. D275 is an active-site residue. A disulfide bond links C309 and C342.

This sequence belongs to the peptidase A1 family.

Its subcellular location is the secreted. The catalysed reaction is Preferential cleavage: hydrophobic, preferably aromatic, residues in P1 and P1' positions. Cleaves 1-Phe-|-Val-2, 4-Gln-|-His-5, 13-Glu-|-Ala-14, 14-Ala-|-Leu-15, 15-Leu-|-Tyr-16, 16-Tyr-|-Leu-17, 23-Gly-|-Phe-24, 24-Phe-|-Phe-25 and 25-Phe-|-Tyr-26 bonds in the B chain of insulin.. In terms of biological role, shows particularly broad specificity; although bonds involving phenylalanine and leucine are preferred, many others are also cleaved to some extent. This chain is Pepsin A (PGA), found in Rhinolophus ferrumequinum (Greater horseshoe bat).